The chain runs to 431 residues: Glutamyl-tRNA(Gln) amidotransferase subunit A (431 aa).

Residues K55 and S130 each act as charge relay system in the active site. S154 serves as the catalytic Acyl-ester intermediate.

This sequence belongs to the amidase family. GatA subfamily. Heterotrimer of A, B and C subunits.

It catalyses the reaction L-glutamyl-tRNA(Gln) + L-glutamine + ATP + H2O = L-glutaminyl-tRNA(Gln) + L-glutamate + ADP + phosphate + H(+). Its function is as follows. Allows the formation of correctly charged Gln-tRNA(Gln) through the transamidation of misacylated Glu-tRNA(Gln) in organisms which lack glutaminyl-tRNA synthetase. The reaction takes place in the presence of glutamine and ATP through an activated gamma-phospho-Glu-tRNA(Gln). In Methanococcus maripaludis (strain DSM 14266 / JCM 13030 / NBRC 101832 / S2 / LL), this protein is Glutamyl-tRNA(Gln) amidotransferase subunit A.